The chain runs to 207 residues: Holliday junction branch migration complex subunit RuvA (207 aa).

A domain I region spans residues 1 to 64; it reads MIGRLTGILA…ETSQQLFGFS (64 aa). Residues 65–142 form a domain II region; sequence SQQDRELFRM…ALDTTPSEHS (78 aa). The flexible linker stretch occupies residues 143–157; that stretch reads PTGEGAGIVRVDPVI. The segment at 158–207 is domain III; the sequence is NTNVIIADAESALIGLGYKPTEAAKAVSAAYNDTITTSEDLIRAALKGMI.

Belongs to the RuvA family. Homotetramer. Forms an RuvA(8)-RuvB(12)-Holliday junction (HJ) complex. HJ DNA is sandwiched between 2 RuvA tetramers; dsDNA enters through RuvA and exits via RuvB. An RuvB hexamer assembles on each DNA strand where it exits the tetramer. Each RuvB hexamer is contacted by two RuvA subunits (via domain III) on 2 adjacent RuvB subunits; this complex drives branch migration. In the full resolvosome a probable DNA-RuvA(4)-RuvB(12)-RuvC(2) complex forms which resolves the HJ.

It is found in the cytoplasm. The RuvA-RuvB-RuvC complex processes Holliday junction (HJ) DNA during genetic recombination and DNA repair, while the RuvA-RuvB complex plays an important role in the rescue of blocked DNA replication forks via replication fork reversal (RFR). RuvA specifically binds to HJ cruciform DNA, conferring on it an open structure. The RuvB hexamer acts as an ATP-dependent pump, pulling dsDNA into and through the RuvAB complex. HJ branch migration allows RuvC to scan DNA until it finds its consensus sequence, where it cleaves and resolves the cruciform DNA. In Saccharophagus degradans (strain 2-40 / ATCC 43961 / DSM 17024), this protein is Holliday junction branch migration complex subunit RuvA.